Consider the following 193-residue polypeptide: dCTP deaminase (193 aa).

DCTP-binding positions include 110–115 (RSSLAR), D128, 136–138 (VLE), Y171, K178, and Q182. The active-site Proton donor/acceptor is the E138.

The protein belongs to the dCTP deaminase family. As to quaternary structure, homotrimer.

The catalysed reaction is dCTP + H2O + H(+) = dUTP + NH4(+). Its pathway is pyrimidine metabolism; dUMP biosynthesis; dUMP from dCTP (dUTP route): step 1/2. Its function is as follows. Catalyzes the deamination of dCTP to dUTP. The polypeptide is dCTP deaminase (Escherichia coli (strain K12 / MC4100 / BW2952)).